We begin with the raw amino-acid sequence, 477 residues long: RNA pseudouridine synthase 4, mitochondrial (477 aa).

Residues 1–43 (MAKWRLATATLRRQLQSSSPTISTFKNPTKALSAAAHQSTRSY) constitute a mitochondrion transit peptide. The tract at residues 34–55 (AAAHQSTRSYSTTQTDDSRGKW) is disordered. The segment covering 36–48 (AHQSTRSYSTTQT) has biased composition (polar residues). Residues 90–175 (TTALRWILRC…AKKESFQCSD (86 aa)) form the S4 RNA-binding domain. Residue Asp236 is part of the active site.

Belongs to the pseudouridine synthase RluA family.

Its subcellular location is the mitochondrion. The catalysed reaction is a uridine in RNA = a pseudouridine in RNA. The protein is RNA pseudouridine synthase 4, mitochondrial of Arabidopsis thaliana (Mouse-ear cress).